The primary structure comprises 343 residues: UDP-3-O-acylglucosamine N-acyltransferase (343 aa).

His239 functions as the Proton acceptor in the catalytic mechanism.

The protein belongs to the transferase hexapeptide repeat family. LpxD subfamily. Homotrimer.

It catalyses the reaction a UDP-3-O-[(3R)-3-hydroxyacyl]-alpha-D-glucosamine + a (3R)-hydroxyacyl-[ACP] = a UDP-2-N,3-O-bis[(3R)-3-hydroxyacyl]-alpha-D-glucosamine + holo-[ACP] + H(+). Its pathway is bacterial outer membrane biogenesis; LPS lipid A biosynthesis. Functionally, catalyzes the N-acylation of UDP-3-O-acylglucosamine using 3-hydroxyacyl-ACP as the acyl donor. Is involved in the biosynthesis of lipid A, a phosphorylated glycolipid that anchors the lipopolysaccharide to the outer membrane of the cell. The protein is UDP-3-O-acylglucosamine N-acyltransferase of Vibrio parahaemolyticus serotype O3:K6 (strain RIMD 2210633).